We begin with the raw amino-acid sequence, 132 residues long: uncharacterized protein (132 aa).

3 helical membrane-spanning segments follow: residues 18–38 (MLFI…FIGI), 50–70 (IIYF…GVFI), and 71–91 (VVPL…LYLI).

The protein resides in the cell membrane. This is an uncharacterized protein from Bacillus subtilis (strain 168).